The primary structure comprises 209 residues: Thymidine kinase (209 aa).

Residues 9 to 16 (AAMNAGKS) and 88 to 91 (DEAQ) each bind ATP. The Proton acceptor role is filled by glutamate 89. Residues cysteine 146, cysteine 148, cysteine 183, and histidine 186 each coordinate Zn(2+).

This sequence belongs to the thymidine kinase family. As to quaternary structure, homotetramer.

It localises to the cytoplasm. It carries out the reaction thymidine + ATP = dTMP + ADP + H(+). This Legionella pneumophila (strain Lens) protein is Thymidine kinase.